A 75-amino-acid chain; its full sequence is Small integral membrane protein 7 (75 aa).

An N-terminal signal peptide occupies residues 1–17 (MIGDILLFGTLLMNAGA). The Extracellular segment spans residues 18 to 53 (VLNFKLKKKDTQGFGEESREPSTGDNIREFLLSLRY). The helical transmembrane segment at 54–74 (FRIFIALWNIFMMFCMIVLFG) threads the bilayer. Position 75 (serine 75) is a topological domain, cytoplasmic.

This sequence belongs to the SMIM7 family.

It localises to the membrane. The chain is Small integral membrane protein 7 (SMIM7) from Homo sapiens (Human).